Consider the following 113-residue polypeptide: Beta-defensin 112 (113 aa).

Disulfide bonds link C54-C82, C61-C75, and C65-C83.

Belongs to the beta-defensin family.

The protein localises to the secreted. Functionally, has antibacterial activity. The chain is Beta-defensin 112 (DEFB112) from Homo sapiens (Human).